A 273-amino-acid polypeptide reads, in one-letter code: 5-deoxy-glucuronate isomerase (273 aa).

Belongs to the isomerase IolB family.

The catalysed reaction is 5-deoxy-D-glucuronate = 5-dehydro-2-deoxy-D-gluconate. Its pathway is polyol metabolism; myo-inositol degradation into acetyl-CoA; acetyl-CoA from myo-inositol: step 4/7. Involved in the isomerization of 5-deoxy-glucuronate (5DG) to 5-dehydro-2-deoxy-D-gluconate (DKG or 2-deoxy-5-keto-D-gluconate). This chain is 5-deoxy-glucuronate isomerase, found in Listeria monocytogenes serovar 1/2a (strain ATCC BAA-679 / EGD-e).